Here is a 334-residue protein sequence, read N- to C-terminus: Cytoskeleton protein RodZ (334 aa).

Residues 1–111 (MNTEATHDQN…LGKRRKKRDG (111 aa)) lie on the Cytoplasmic side of the membrane. One can recognise an HTH cro/C1-type domain in the interval 19-71 (LRNAREQLGLSQQAVAERLCLKVSTVRDIEEDKAPSDLASTFLRGYIRSYARL). The segment at residues 30–49 (QQAVAERLCLKVSTVRDIEE) is a DNA-binding region (H-T-H motif). A helical; Signal-anchor for type II membrane protein transmembrane segment spans residues 112 to 132 (WLMSFTWLVLFVVVGLTGAWW). The Periplasmic portion of the chain corresponds to 133 to 334 (WQNHKAHQEE…TLNAEPTPAQ (202 aa)). Residues 152-210 (AGLNADKDSGQSVPLDTGAVTSQDTTPAQTAPAPATPVDSTAATQTPAPTAAATQNTVV) are disordered. A compositionally biased stretch (polar residues) spans 161–175 (GQSVPLDTGAVTSQD). A compositionally biased stretch (low complexity) spans 176-210 (TTPAQTAPAPATPVDSTAATQTPAPTAAATQNTVV).

This sequence belongs to the RodZ family.

The protein resides in the cell inner membrane. Cytoskeletal protein that is involved in cell-shape control through regulation of the length of the long axis. The protein is Cytoskeleton protein RodZ of Salmonella gallinarum (strain 287/91 / NCTC 13346).